A 474-amino-acid chain; its full sequence is Glutamate--tRNA ligase (474 aa).

The 'HIGH' region motif lies at P9–G19. Residues K240 to R244 carry the 'KMSKS' region motif. An ATP-binding site is contributed by K243.

Belongs to the class-I aminoacyl-tRNA synthetase family. Glutamate--tRNA ligase type 1 subfamily. Monomer.

It is found in the cytoplasm. The catalysed reaction is tRNA(Glu) + L-glutamate + ATP = L-glutamyl-tRNA(Glu) + AMP + diphosphate. Its function is as follows. Catalyzes the attachment of glutamate to tRNA(Glu) in a two-step reaction: glutamate is first activated by ATP to form Glu-AMP and then transferred to the acceptor end of tRNA(Glu). In Aliivibrio salmonicida (strain LFI1238) (Vibrio salmonicida (strain LFI1238)), this protein is Glutamate--tRNA ligase.